The sequence spans 98 residues: Small ribosomal subunit protein uS19 (98 aa).

The interval 74 to 98 (FAPTRNYRGHAGGKSEKGGSAPRKK) is disordered.

The protein belongs to the universal ribosomal protein uS19 family.

Functionally, protein S19 forms a complex with S13 that binds strongly to the 16S ribosomal RNA. This Chlorobium chlorochromatii (strain CaD3) protein is Small ribosomal subunit protein uS19.